The chain runs to 508 residues: Photosystem II CP47 reaction center protein (508 aa).

A run of 6 helical transmembrane segments spans residues Ala-21–Ser-36, Ile-101–Trp-115, Gly-140–Phe-156, Ile-203–Ser-218, Val-237–Val-252, and Asn-457–Arg-472.

It belongs to the PsbB/PsbC family. PsbB subfamily. In terms of assembly, PSII is composed of 1 copy each of membrane proteins PsbA, PsbB, PsbC, PsbD, PsbE, PsbF, PsbH, PsbI, PsbJ, PsbK, PsbL, PsbM, PsbT, PsbX, PsbY, PsbZ, Psb30/Ycf12, at least 3 peripheral proteins of the oxygen-evolving complex and a large number of cofactors. It forms dimeric complexes. Binds multiple chlorophylls. PSII binds additional chlorophylls, carotenoids and specific lipids. is required as a cofactor.

It localises to the plastid. The protein resides in the chloroplast thylakoid membrane. Functionally, one of the components of the core complex of photosystem II (PSII). It binds chlorophyll and helps catalyze the primary light-induced photochemical processes of PSII. PSII is a light-driven water:plastoquinone oxidoreductase, using light energy to abstract electrons from H(2)O, generating O(2) and a proton gradient subsequently used for ATP formation. The sequence is that of Photosystem II CP47 reaction center protein from Staurastrum punctulatum (Green alga).